Here is a 2566-residue protein sequence, read N- to C-terminus: Highly reducing polyketide synthase verA (2566 aa).

Residues 3–440 (PEPIAIIGTG…GTNAHAILES (438 aa)) form the Ketosynthase family 3 (KS3) domain. The disordered stretch occupies residues 35 to 61 (VASEPPSTRFDNRSFYDPDPSHPGTTN). Basic and acidic residues predominate over residues 44–54 (FDNRSFYDPDP). Residues Cys176, His316, and His360 each act as for beta-ketoacyl synthase activity in the active site. The malonyl-CoA:ACP transacylase (MAT) domain stretch occupies residues 554-880 (IFTGQGAQWP…IGLSNRGASG (327 aa)). Ser648 functions as the For malonyltransferase activity in the catalytic mechanism. Positions 950 to 1081 (HPLLGSLEAD…GKLLICWGNP (132 aa)) are N-terminal hotdog fold. Residues 950-1246 (HPLLGSLEAD…EGVHISPLGP (297 aa)) are dehydratase (DH) domain. The 301-residue stretch at 950–1250 (HPLLGSLEAD…ISPLGPPDRQ (301 aa)) folds into the PKS/mFAS DH domain. Residue His982 is the Proton acceptor; for dehydratase activity of the active site. Positions 1096 to 1250 (AGAVDIKDFY…ISPLGPPDRQ (155 aa)) are C-terminal hotdog fold. The active-site Proton donor; for dehydratase activity is Asp1156. A methyltransferase (CMet) domain region spans residues 1386-1581 (DVLSRFYKED…TGFGGIDTIT (196 aa)). Positions 2127–2294 (KTYLLVGMTG…RRARNIVGSI (168 aa)) are ketoreductase (KR) domain. Positions 2411 to 2489 (EAAEIVAAGL…ALTADSVSKL (79 aa)) constitute a Carrier domain. Ser2449 carries the O-(pantetheine 4'-phosphoryl)serine modification. Residues 2505–2540 (KDVSGLTSPPEVPSDASRSSVSSGMDEIVTPESPSF) are disordered. The span at 2518 to 2527 (SDASRSSVSS) shows a compositional bias: low complexity.

Pantetheine 4'-phosphate is required as a cofactor.

It participates in secondary metabolite biosynthesis; terpenoid biosynthesis. Its pathway is mycotoxin biosynthesis. Functionally, highly reducing polyketide synthase (HR-PKS); part of the gene cluster that mediates the biosynthesis of the neurotoxin verrucosidin, a methylated alpha-pyrone polyketide that inhibits oxidative phosphorylation in mitochondria and thereby causes neurological diseases. The carbon backbone of verrucosidin is synthesized by the HR-PKS verA, and further modified by the other verrucodidin cluster enzymes. The protein is Highly reducing polyketide synthase verA of Penicillium polonicum.